The sequence spans 279 residues: Acyl-coenzyme A thioesterase MBLAC2 (279 aa).

Ser-2 is modified (N-acetylserine). Positions 83, 85, 87, 88, 170, 189, and 231 each coordinate Zn(2+). Cys-254 carries S-palmitoyl cysteine lipidation.

The protein belongs to the metallo-beta-lactamase superfamily. Glyoxalase II family. Zn(2+) is required as a cofactor. In terms of processing, palmitoylated on Cys-254 by ZDHHC20.

The protein resides in the endoplasmic reticulum membrane. Its subcellular location is the cell membrane. It catalyses the reaction hexadecanoyl-CoA + H2O = hexadecanoate + CoA + H(+). The enzyme catalyses dodecanoyl-CoA + H2O = dodecanoate + CoA + H(+). The catalysed reaction is tetradecanoyl-CoA + H2O = tetradecanoate + CoA + H(+). It carries out the reaction octadecanoyl-CoA + H2O = octadecanoate + CoA + H(+). It catalyses the reaction a beta-lactam + H2O = a substituted beta-amino acid. Beta-lactamase activity is inhibited by sulbactam. Functionally, acyl-CoA thioesterases are a group of enzymes that catalyze the hydrolysis of acyl-CoAs to the free fatty acid and coenzyme A (CoASH), providing the potential to regulate intracellular levels of acyl-CoAs, free fatty acids and CoASH. Has an acyl-CoA thioesterase activity towards the long chain fatty acyl-CoA thioester palmitoyl-CoA (hexadecanoyl-CoA; C16:0-CoA). Displays a substrate preference for fatty acyl-CoAs with chain-lengths C12-C18. Possesses beta-lactamase activity, catalyzing the hydrolysis of penicillin G and nitrocefin. Exhibits no activity towards other beta-lactam antibiotic classes including cephalosporins (cefotaxime) and carbapenems (imipenem). The sequence is that of Acyl-coenzyme A thioesterase MBLAC2 (MBLAC2) from Homo sapiens (Human).